The primary structure comprises 388 residues: uncharacterized protein (388 aa).

Helical transmembrane passes span 18–38 (AAMF…PLYV), 42–62 (LHLS…ATLL), 89–111 (ASGL…WAIL), 116–136 (VLLG…GMWL), 145–165 (VISW…PLGL), 171–191 (AGLA…SGVI), 219–239 (TGLV…ALWF), 248–268 (GFAM…CAKF), 287–307 (TGLA…GAAI), 341–361 (AFQD…TPFI), and 365–385 (QVFL…HLLL).

Belongs to the major facilitator superfamily. YfcJ family.

It localises to the cell inner membrane. This is an uncharacterized protein from Salmonella typhimurium (strain LT2 / SGSC1412 / ATCC 700720).